Reading from the N-terminus, the 167-residue chain is Large ribosomal subunit protein uL10 (167 aa).

It belongs to the universal ribosomal protein uL10 family. As to quaternary structure, part of the ribosomal stalk of the 50S ribosomal subunit. The N-terminus interacts with L11 and the large rRNA to form the base of the stalk. The C-terminus forms an elongated spine to which L12 dimers bind in a sequential fashion forming a multimeric L10(L12)X complex.

Functionally, forms part of the ribosomal stalk, playing a central role in the interaction of the ribosome with GTP-bound translation factors. This chain is Large ribosomal subunit protein uL10, found in Streptococcus mutans serotype c (strain ATCC 700610 / UA159).